The primary structure comprises 1330 residues: Sister chromatid cohesion protein PDS5 homolog A (1330 aa).

The HEAT repeat unit spans residues 387–423 (SLVNDQLLGFVRERTLDKRWRVRKEAMMGLAQLYKKY). The segment at 1138 to 1330 (VNKPLSATGR…AAQRQIDLQR (193 aa)) is disordered. Residues 1160–1171 (SNISVNSELSSS) show a composition bias toward low complexity. Positions 1216–1225 (SDQATQGNST) are enriched in polar residues.

The protein belongs to the PDS5 family. In terms of assembly, interacts with the cohesin complex. Binds chromatin in a cohesin-dependent manner.

The protein localises to the nucleus. May regulate sister chromatid cohesion during mitosis and couple it to DNA replication. The chain is Sister chromatid cohesion protein PDS5 homolog A from Gallus gallus (Chicken).